The following is a 222-amino-acid chain: Glutathione S-transferase alpha-4 (222 aa).

N-acetylmethionine is present on Met1. In terms of domain architecture, GST N-terminal spans 3–83 (VKPKLYYFQG…YLAAKYNLYG (81 aa)). Residues Tyr9, 54–55 (QV), and 67–68 (QT) contribute to the glutathione site. The 124-residue stretch at 85 to 208 (DLKERVRIDM…QPGSQRKPPP (124 aa)) folds into the GST C-terminal domain.

It belongs to the GST superfamily. Alpha family. Homodimer.

It is found in the cytoplasm. It catalyses the reaction RX + glutathione = an S-substituted glutathione + a halide anion + H(+). In terms of biological role, conjugation of reduced glutathione to a wide number of exogenous and endogenous hydrophobic electrophiles. This chain is Glutathione S-transferase alpha-4 (Gsta4), found in Rattus norvegicus (Rat).